The primary structure comprises 453 residues: MGSVLGLCSMASWIPCLCGSAPCLLCRCCPSGNNSTVTRLIYALFLLVGVCVACVMLIPGMEEQLNKIPGFCENEKGMVPCNILVGYKAVYRLCFGLAMFYLLLSLLMIKVKSSSDPRAAIHNGFWFFKFAAAIAIIIGAFFIPEGTFTTVWFYVGMAGAFCFILIQLVLLIDFAHSWNESWVEKMEEGNSRCWYAALLSATALNYLLSLVAVVLFFVYYTHPASCAENKAFISVNMLLCLGASIMSILPKIQESQPRSGLLQSSVITVYTMYLTWSAMTNEPETECNPSLLNIIGYNTTSTVSKEGQSVQWWHTQGIIGLILFLLCVFYSSIRTSNNSQVNKLTLTSDESTLIEDGGARNDGSLEDGDDVHRAVDNERDGVTYSYSFFHFMLFLASLYIMMTLTNWYRYEPSREMKSQWTAVWVKISSSWIGIVLYVWTLVAPLVLTNRDFD.

G2 is lipidated: N-myristoyl glycine. Topologically, residues 2–39 are cytoplasmic; the sequence is GSVLGLCSMASWIPCLCGSAPCLLCRCCPSGNNSTVTR. A helical membrane pass occupies residues 40-60; that stretch reads LIYALFLLVGVCVACVMLIPG. Residues 61–88 are Lumenal-facing; that stretch reads MEEQLNKIPGFCENEKGMVPCNILVGYK. A helical membrane pass occupies residues 89–109; it reads AVYRLCFGLAMFYLLLSLLMI. Residues 110 to 123 lie on the Cytoplasmic side of the membrane; that stretch reads KVKSSSDPRAAIHN. The chain crosses the membrane as a helical span at residues 124–144; the sequence is GFWFFKFAAAIAIIIGAFFIP. Residues 145–151 lie on the Lumenal side of the membrane; it reads EGTFTTV. Residues 152-172 form a helical membrane-spanning segment; that stretch reads WFYVGMAGAFCFILIQLVLLI. Over 173 to 197 the chain is Cytoplasmic; that stretch reads DFAHSWNESWVEKMEEGNSRCWYAA. Residues 198-218 form a helical membrane-spanning segment; sequence LLSATALNYLLSLVAVVLFFV. Over 219–231 the chain is Lumenal; that stretch reads YYTHPASCAENKA. The helical transmembrane segment at 232–252 threads the bilayer; that stretch reads FISVNMLLCLGASIMSILPKI. Residues 253–259 are Cytoplasmic-facing; that stretch reads QESQPRS. The helical transmembrane segment at 260 to 280 threads the bilayer; that stretch reads GLLQSSVITVYTMYLTWSAMT. At 281-309 the chain is on the lumenal side; that stretch reads NEPETECNPSLLNIIGYNTTSTVSKEGQS. A helical membrane pass occupies residues 310–330; sequence VQWWHTQGIIGLILFLLCVFY. At 331–387 the chain is on the cytoplasmic side; sequence SSIRTSNNSQVNKLTLTSDESTLIEDGGARNDGSLEDGDDVHRAVDNERDGVTYSYS. Residue S351 is modified to Phosphoserine. Position 352 is a phosphothreonine (T352). S364 is subject to Phosphoserine. The helical transmembrane segment at 388–408 threads the bilayer; the sequence is FFHFMLFLASLYIMMTLTNWY. At 409–426 the chain is on the lumenal side; the sequence is RYEPSREMKSQWTAVWVK. Residues 427-447 form a helical membrane-spanning segment; the sequence is ISSSWIGIVLYVWTLVAPLVL. Over 448–453 the chain is Cytoplasmic; it reads TNRDFD.

This sequence belongs to the TDE1 family. Interacts with SPTLC1.

The protein localises to the endoplasmic reticulum membrane. Its function is as follows. Enhances the incorporation of serine into phosphatidylserine and sphingolipids. This chain is Serine incorporator 1 (SERINC1), found in Bos taurus (Bovine).